The chain runs to 226 residues: Cytidylate kinase (226 aa).

11–19 (GPASAGKST) is a binding site for ATP.

This sequence belongs to the cytidylate kinase family. Type 1 subfamily.

It is found in the cytoplasm. It carries out the reaction CMP + ATP = CDP + ADP. The enzyme catalyses dCMP + ATP = dCDP + ADP. In Limosilactobacillus fermentum (strain NBRC 3956 / LMG 18251) (Lactobacillus fermentum), this protein is Cytidylate kinase.